The primary structure comprises 165 residues: Chorismate pyruvate-lyase (165 aa).

Residues Met-35, Arg-77, Leu-115, and Glu-156 each contribute to the substrate site.

Belongs to the UbiC family. In terms of assembly, monomer.

Its subcellular location is the cytoplasm. It carries out the reaction chorismate = 4-hydroxybenzoate + pyruvate. Its pathway is cofactor biosynthesis; ubiquinone biosynthesis. Removes the pyruvyl group from chorismate, with concomitant aromatization of the ring, to provide 4-hydroxybenzoate (4HB) for the ubiquinone pathway. In Salmonella gallinarum (strain 287/91 / NCTC 13346), this protein is Chorismate pyruvate-lyase.